Here is a 734-residue protein sequence, read N- to C-terminus: Photosystem I P700 chlorophyll a apoprotein A2 (734 aa).

8 helical membrane passes run 46–69 (IFAS…FHVA), 135–158 (LYTG…LHLQ), 175–199 (LNHH…HVAI), 273–291 (IAHH…GHMY), 330–353 (IHFQ…QHMY), 369–395 (AALY…IFFI), 417–439 (AIIS…LYVH), and 517–535 (FLVH…LILV). Residues cysteine 559 and cysteine 568 each contribute to the [4Fe-4S] cluster site. 2 consecutive transmembrane segments (helical) span residues 575–596 (AFYL…YWHW) and 643–665 (LSVW…MFLI). Residues histidine 654, methionine 662, and tyrosine 670 each contribute to the chlorophyll a site. Tryptophan 671 contributes to the phylloquinone binding site. The helical transmembrane segment at 707–727 (LVGLAHFSVGYIFTYAAFLIA) threads the bilayer.

This sequence belongs to the PsaA/PsaB family. The PsaA/B heterodimer binds the P700 chlorophyll special pair and subsequent electron acceptors. PSI consists of a core antenna complex that captures photons, and an electron transfer chain that converts photonic excitation into a charge separation. The eukaryotic PSI reaction center is composed of at least 11 subunits. Requires P700 is a chlorophyll a/chlorophyll a' dimer, A0 is one or more chlorophyll a, A1 is one or both phylloquinones and FX is a shared 4Fe-4S iron-sulfur center. as cofactor.

It localises to the plastid. The protein localises to the chloroplast thylakoid membrane. It carries out the reaction reduced [plastocyanin] + hnu + oxidized [2Fe-2S]-[ferredoxin] = oxidized [plastocyanin] + reduced [2Fe-2S]-[ferredoxin]. In terms of biological role, psaA and PsaB bind P700, the primary electron donor of photosystem I (PSI), as well as the electron acceptors A0, A1 and FX. PSI is a plastocyanin-ferredoxin oxidoreductase, converting photonic excitation into a charge separation, which transfers an electron from the donor P700 chlorophyll pair to the spectroscopically characterized acceptors A0, A1, FX, FA and FB in turn. Oxidized P700 is reduced on the lumenal side of the thylakoid membrane by plastocyanin. The chain is Photosystem I P700 chlorophyll a apoprotein A2 from Nymphaea alba (White water-lily).